The sequence spans 349 residues: Hypoxia-inducible factor 1-alpha inhibitor (349 aa).

Positions 1-10 are enriched in low complexity; sequence MAATAAEAVA. The interval 1 to 51 is disordered; sequence MAATAAEAVASGSGEPREEAGALGPAWDESQLRSYSFPTRPIPRLSQSDPR. At alanine 2 the chain carries N-acetylalanine. The segment at 2–125 is interaction with VHL; sequence AATAAEAVAS…PRSNREEMKF (124 aa). One can recognise a JmjC domain in the interval 142–312; the sequence is ERLYLQQTLN…PKRIEYPLKA (171 aa). Tyrosine 145 serves as a coordination point for 2-oxoglutarate. Substrate is bound by residues aspartate 152 and 181–183; that span reads QLT. Position 196 (threonine 196) interacts with 2-oxoglutarate. Residues histidine 199 and aspartate 201 each coordinate Fe cation. Substrate is bound at residue 201–203; that stretch reads DEQ. 2-oxoglutarate-binding residues include asparagine 205 and lysine 214. 238–239 contributes to the substrate binding site; it reads RQ. Histidine 279 provides a ligand contact to Fe cation. Asparagine 294 is a binding site for 2-oxoglutarate. The substrate site is built by alanine 300 and asparagine 321.

As to quaternary structure, homodimer; homodimerization is essential for catalytic activity. Interacts with VHL and HIF1A. Part of a complex with VHL, HIF1A and HDAC1 or HDAC2 or HDAC3. Interacts with NFKB1 and NFKBIA. Interacts with NOTCH1, NOTCH2 and NOTCH3 but not with NOTCH4. Interacts with APBA3; binding inhibits HIF1AN binding to HIF1A. Interacts with TNKS2. Interacts with PPP1R12A. Interacts with ASB4. Interacts with UBE3A. Interacts with ANKS3. Interacts with NECAB3; the interaction is indirect and seems to be mediated by APBA3. The cofactor is Fe(2+).

It is found in the nucleus. The protein resides in the cytoplasm. The protein localises to the perinuclear region. It carries out the reaction L-asparaginyl-[hypoxia-inducible factor alpha subunit] + 2-oxoglutarate + O2 = (3S)-3-hydroxy-L-asparaginyl-[hypoxia-inducible factor alpha subunit] + succinate + CO2. The enzyme catalyses L-histidyl-[ankyrin-repeat domain protein] + 2-oxoglutarate + O2 = (3S)-3-hydroxy-L-histidyl-[ankyrin-repeat domain protein] + succinate + CO2. The catalysed reaction is L-asparaginyl-[ankyrin-repeat domain protein] + 2-oxoglutarate + O2 = (3S)-3-hydroxy-L-asparaginyl-[ankyrin-repeat domain protein] + succinate + CO2. It catalyses the reaction L-aspartyl-[ankyrin-repeat domain protein] + 2-oxoglutarate + O2 = (3S)-3-hydroxy-L-aspartyl-[ankyrin-repeat domain protein] + succinate + CO2. Hydroxylates HIF-1 alpha at 'Asn-803' in the C-terminal transactivation domain (CAD). Functions as an oxygen sensor and, under normoxic conditions, the hydroxylation prevents interaction of HIF-1 with transcriptional coactivators including Cbp/p300-interacting transactivator. Involved in transcriptional repression through interaction with HIF1A, VHL and histone deacetylases. Hydroxylates specific Asn residues within ankyrin repeat domains (ARD) of NFKB1, NFKBIA, NOTCH1, ASB4, PPP1R12A and several other ARD-containing proteins. Also hydroxylates Asp and His residues within ARDs of ANK1 and TNKS2, respectively. Negatively regulates NOTCH1 activity, accelerating myogenic differentiation. Positively regulates ASB4 activity, promoting vascular differentiation. In Homo sapiens (Human), this protein is Hypoxia-inducible factor 1-alpha inhibitor (HIF1AN).